The chain runs to 575 residues: Proline--tRNA ligase, cytoplasmic (575 aa).

This sequence belongs to the class-II aminoacyl-tRNA synthetase family.

It is found in the cytoplasm. It catalyses the reaction tRNA(Pro) + L-proline + ATP = L-prolyl-tRNA(Pro) + AMP + diphosphate. The chain is Proline--tRNA ligase, cytoplasmic (PRS) from Candida albicans (Yeast).